A 256-amino-acid chain; its full sequence is Trans-aconitate 2-methyltransferase (256 aa).

This sequence belongs to the methyltransferase superfamily. Tam family.

Its subcellular location is the cytoplasm. It carries out the reaction trans-aconitate + S-adenosyl-L-methionine = (E)-3-(methoxycarbonyl)pent-2-enedioate + S-adenosyl-L-homocysteine. Its function is as follows. Catalyzes the S-adenosylmethionine monomethyl esterification of trans-aconitate. The polypeptide is Trans-aconitate 2-methyltransferase (Rhodopseudomonas palustris (strain BisA53)).